The following is a 468-amino-acid chain: ATP synthase subunit beta (468 aa).

148-155 (GGAGVGKT) contacts ATP.

It belongs to the ATPase alpha/beta chains family. F-type ATPases have 2 components, CF(1) - the catalytic core - and CF(0) - the membrane proton channel. CF(1) has five subunits: alpha(3), beta(3), gamma(1), delta(1), epsilon(1). CF(0) has three main subunits: a(1), b(2) and c(9-12). The alpha and beta chains form an alternating ring which encloses part of the gamma chain. CF(1) is attached to CF(0) by a central stalk formed by the gamma and epsilon chains, while a peripheral stalk is formed by the delta and b chains.

It is found in the cell inner membrane. The enzyme catalyses ATP + H2O + 4 H(+)(in) = ADP + phosphate + 5 H(+)(out). Its function is as follows. Produces ATP from ADP in the presence of a proton gradient across the membrane. The catalytic sites are hosted primarily by the beta subunits. In Xanthomonas oryzae pv. oryzae (strain KACC10331 / KXO85), this protein is ATP synthase subunit beta.